Consider the following 379-residue polypeptide: Chaperone protein DnaJ (379 aa).

Residues 5 to 69 form the J domain; that stretch reads EFYDRLGVSK…QKRAAYDQYG (65 aa). The CR-type zinc finger occupies 135–217; the sequence is GAEKEVSYNR…CHGTGHEKKT (83 aa). Zn(2+) is bound by residues Cys-148, Cys-151, Cys-165, Cys-168, Cys-191, Cys-194, Cys-205, and Cys-208. 4 CXXCXGXG motif repeats span residues 148–155, 165–172, 191–198, and 205–212; these read CHTCSGSG, CQKCHGSG, CDVCQGSG, and CPTCHGTG.

This sequence belongs to the DnaJ family. In terms of assembly, homodimer. Requires Zn(2+) as cofactor.

It localises to the cytoplasm. In terms of biological role, participates actively in the response to hyperosmotic and heat shock by preventing the aggregation of stress-denatured proteins and by disaggregating proteins, also in an autonomous, DnaK-independent fashion. Unfolded proteins bind initially to DnaJ; upon interaction with the DnaJ-bound protein, DnaK hydrolyzes its bound ATP, resulting in the formation of a stable complex. GrpE releases ADP from DnaK; ATP binding to DnaK triggers the release of the substrate protein, thus completing the reaction cycle. Several rounds of ATP-dependent interactions between DnaJ, DnaK and GrpE are required for fully efficient folding. Also involved, together with DnaK and GrpE, in the DNA replication of plasmids through activation of initiation proteins. This Streptococcus agalactiae serotype III (strain NEM316) protein is Chaperone protein DnaJ.